A 217-amino-acid polypeptide reads, in one-letter code: Secreted RxLR effector protein 147 (217 aa).

The signal sequence occupies residues 1–23; the sequence is MRGAFYVTTALLITNSIRTAAEA. Positions 22–52 are disordered; the sequence is EANPPGRQPMSHHDGVVPGKSSPRRFLQGSH. Residues 46–67 carry the RxLR-dEER motif; the sequence is RFLQGSHEPHDKFAVSAANEER.

The protein belongs to the RxLR effector family.

It localises to the secreted. The protein localises to the host nucleus. Its subcellular location is the host cytoplasm. Its function is as follows. Secreted effector that completely suppresses the host cell death induced by cell death-inducing proteins. The polypeptide is Secreted RxLR effector protein 147 (Plasmopara viticola (Downy mildew of grapevine)).